Reading from the N-terminus, the 589-residue chain is Transmembrane 9 superfamily member 1 (589 aa).

Residues 1 to 27 (MTVLGHPRSWSCHCLPVLILLLGIGHG) form the signal peptide. A glycan (N-linked (GlcNAc...) asparagine) is linked at asparagine 178. The next 4 membrane-spanning stretches (helical) occupy residues 237–257 (LSIINSMVLVFLLVGFVAVIL), 310–330 (VLGVGAQFLALGTGIIVMALL), 339–359 (GAINSAAILLYALTCCISGYV), and 373–393 (VWNIILTTSLFSVPFFLTWSV). Asparagine 401 carries N-linked (GlcNAc...) asparagine glycosylation. 3 helical membrane passes run 412 to 432 (ILLLLTVWLLVGFPLTVIGGI), 482 to 502 (GILFFVFAILLSVGACISIAL), and 518 to 538 (SVLSVGSTGLFIFLYSVFYYA). Asparagine 542 carries N-linked (GlcNAc...) asparagine glycosylation. The helical transmembrane segment at 552-572 (FFGYSLLTGYVFFLMLGTISF) threads the bilayer.

The protein belongs to the nonaspanin (TM9SF) (TC 9.A.2) family.

The protein resides in the lysosome membrane. It localises to the cytoplasmic vesicle. Its subcellular location is the autophagosome membrane. Its function is as follows. Plays an essential role in autophagy. In Rattus norvegicus (Rat), this protein is Transmembrane 9 superfamily member 1 (Tm9sf1).